The chain runs to 418 residues: MKQVISSFLCRPRFVGSAIWLLPVALSHAAEAPPFPNLLQQSLALAPAMVAQAANVRAAGADAAQAQAWLNPRIDTVLENLGAPSSDGLSQRQNTYSITQPFELGGKRGARIEVGERNFAAAQARERQAQVAYAAELAVAYATAEAALGRKILATENLARANEELAAARALVDSGKEASLRSAQAKASVAAAQAAEAAATNDATQALARLSAMSGASEPYTAVTSSLLTTQAVVPNAPAALAESPSVRAAEAERNALDAQVDVERKRWIPDVGVSAGVRRYGWTNSSGYVVGVTASIPLFDQNRNGINAAVERVAAAQARLDSVRLEANVARQSAISQVATADKQLAAASEGEQAAAEAYRMGRIGYESGKTPLMELLAVRRALVDARQLTIDARLARVRALAALAQADGRLAFEESR.

Positions 1–29 (MKQVISSFLCRPRFVGSAIWLLPVALSHA) are cleaved as a signal peptide.

The protein belongs to the outer membrane factor (OMF) (TC 1.B.17) family.

Its function is as follows. The products of the genes cnrA, cnrB, and cnrC are likely to form a membrane-bound protein complex catalyzing an energy-dependent efflux of Ni(2+) and Co(2+). The mechanism of action of the CnrCBA complex may be that of a proton/cation antiporter. In Cupriavidus metallidurans (strain ATCC 43123 / DSM 2839 / NBRC 102507 / CH34) (Ralstonia metallidurans), this protein is Nickel and cobalt resistance protein CnrC (cnrC).